The primary structure comprises 394 residues: Aromatic-amino-acid aminotransferase (394 aa).

Positions 34, 65, 127, and 180 each coordinate substrate. N6-(pyridoxal phosphate)lysine is present on Lys-243. Arg-371 is a binding site for substrate.

Belongs to the class-I pyridoxal-phosphate-dependent aminotransferase family. Homodimer. It depends on pyridoxal 5'-phosphate as a cofactor.

The protein localises to the cytoplasm. It catalyses the reaction an aromatic L-alpha-amino acid + 2-oxoglutarate = an aromatic oxo-acid + L-glutamate. Functionally, shows activities toward both dicarboxylic and aromatic substrates. The polypeptide is Aromatic-amino-acid aminotransferase (tyrB) (Paracoccus denitrificans).